Here is a 98-residue protein sequence, read N- to C-terminus: NADH-ubiquinone oxidoreductase chain 4L (98 aa).

A run of 3 helical transmembrane segments spans residues 1 to 21 (MTHI…GLTF), 26 to 46 (LLSA…ALAM), and 59 to 79 (APLL…SLLV).

This sequence belongs to the complex I subunit 4L family.

The protein resides in the mitochondrion membrane. The enzyme catalyses a ubiquinone + NADH + 5 H(+)(in) = a ubiquinol + NAD(+) + 4 H(+)(out). Core subunit of the mitochondrial membrane respiratory chain NADH dehydrogenase (Complex I) which catalyzes electron transfer from NADH through the respiratory chain, using ubiquinone as an electron acceptor. Part of the enzyme membrane arm which is embedded in the lipid bilayer and involved in proton translocation. The protein is NADH-ubiquinone oxidoreductase chain 4L (MT-ND4L) of Polypterus ornatipinnis (Ornate bichir).